A 138-amino-acid polypeptide reads, in one-letter code: Small ribosomal subunit protein uS11c (138 aa).

The disordered stretch occupies residues 1-23 (MAKPILRIGSRKNTRSGSRKNVR). Residues 9–23 (GSRKNTRSGSRKNVR) show a composition bias toward basic residues.

The protein belongs to the universal ribosomal protein uS11 family. Part of the 30S ribosomal subunit.

The protein resides in the plastid. Its subcellular location is the chloroplast. The polypeptide is Small ribosomal subunit protein uS11c (Aethionema grandiflorum (Persian stone-cress)).